The following is a 137-amino-acid chain: Large ribosomal subunit protein uL16 (137 aa).

The protein belongs to the universal ribosomal protein uL16 family. Part of the 50S ribosomal subunit.

In terms of biological role, binds 23S rRNA and is also seen to make contacts with the A and possibly P site tRNAs. In Acinetobacter baumannii (strain AB307-0294), this protein is Large ribosomal subunit protein uL16.